The following is a 130-amino-acid chain: Large ribosomal subunit protein eL34 (130 aa).

Positions 111–130 (KPVSKPPKIQKTAKAASKSK) are disordered.

The protein belongs to the eukaryotic ribosomal protein eL34 family.

The protein is Large ribosomal subunit protein eL34 (RpL34) of Aedes albopictus (Asian tiger mosquito).